Reading from the N-terminus, the 311-residue chain is Glutaminase (311 aa).

Residues serine 66, asparagine 116, glutamate 162, asparagine 169, tyrosine 193, tyrosine 245, and valine 263 each contribute to the substrate site.

Belongs to the glutaminase family. Homotetramer.

The catalysed reaction is L-glutamine + H2O = L-glutamate + NH4(+). The protein is Glutaminase of Rhodopseudomonas palustris (strain TIE-1).